Reading from the N-terminus, the 492-residue chain is Aspartyl/glutamyl-tRNA(Asn/Gln) amidotransferase subunit B (492 aa).

It belongs to the GatB/GatE family. GatB subfamily. In terms of assembly, heterotrimer of A, B and C subunits.

It catalyses the reaction L-glutamyl-tRNA(Gln) + L-glutamine + ATP + H2O = L-glutaminyl-tRNA(Gln) + L-glutamate + ADP + phosphate + H(+). The catalysed reaction is L-aspartyl-tRNA(Asn) + L-glutamine + ATP + H2O = L-asparaginyl-tRNA(Asn) + L-glutamate + ADP + phosphate + 2 H(+). Functionally, allows the formation of correctly charged Asn-tRNA(Asn) or Gln-tRNA(Gln) through the transamidation of misacylated Asp-tRNA(Asn) or Glu-tRNA(Gln) in organisms which lack either or both of asparaginyl-tRNA or glutaminyl-tRNA synthetases. The reaction takes place in the presence of glutamine and ATP through an activated phospho-Asp-tRNA(Asn) or phospho-Glu-tRNA(Gln). The polypeptide is Aspartyl/glutamyl-tRNA(Asn/Gln) amidotransferase subunit B (Dehalococcoides mccartyi (strain ATCC BAA-2266 / KCTC 15142 / 195) (Dehalococcoides ethenogenes (strain 195))).